Here is a 430-residue protein sequence, read N- to C-terminus: Palmitoyltransferase ZDHHC11 (430 aa).

At 1–46 (MTNLNCFGRHRRRTAPHNATGSRSELVAPPIHSRINGWSSPLHSFQ) the chain is on the cytoplasmic side. Residues 47–67 (FIALLIFSFMAIVAFGIYVPL) traverse the membrane as a helical segment. At 68-76 (LPAPWSYAA) the chain is on the lumenal side. Residues 77–97 (YALIGSAFVLHLFSHVTAVTI) form a helical membrane-spanning segment. Topologically, residues 98-176 (DPADVNVRRR…GGRNYWFFFT (79 aa)) are cytoplasmic. Residues 129–179 (LHCTLCEVDVSPKAKHCSTCNKCIADFDHHCKWLNNCVGGRNYWFFFTAVS) form the DHHC domain. The active-site S-palmitoyl cysteine intermediate is the C159. The chain crosses the membrane as a helical span at residues 177-197 (AVSSAVIGVILLIPLVLFVFI). Residues 198-234 (EHYVNPAVLRTAPQFQTVKGNGTWLVFLPVAPVETSS) lie on the Lumenal side of the membrane. The helical transmembrane segment at 235-255 (ISLLVVSFITALLSLAALLLL) threads the bilayer. The Cytoplasmic segment spans residues 256 to 430 (CHLLCFHIYL…QYLHFKQKMP (175 aa)).

It belongs to the DHHC palmitoyltransferase family.

The protein resides in the endoplasmic reticulum membrane. The enzyme catalyses L-cysteinyl-[protein] + hexadecanoyl-CoA = S-hexadecanoyl-L-cysteinyl-[protein] + CoA. In terms of biological role, endoplasmic reticulum-localized palmitoyltransferase that could catalyze the addition of palmitate onto protein substrates. This chain is Palmitoyltransferase ZDHHC11, found in Danio rerio (Zebrafish).